Consider the following 1503-residue polypeptide: DNA-directed RNA polymerase subunit beta' (1503 aa).

Zn(2+) is bound by residues C71, C73, C86, and C89. 3 residues coordinate Mg(2+): D470, D472, and D474. C800, C874, C881, and C884 together coordinate Zn(2+).

It belongs to the RNA polymerase beta' chain family. As to quaternary structure, the RNAP catalytic core consists of 2 alpha, 1 beta, 1 beta' and 1 omega subunit. When a sigma factor is associated with the core the holoenzyme is formed, which can initiate transcription. It depends on Mg(2+) as a cofactor. Zn(2+) serves as cofactor.

It carries out the reaction RNA(n) + a ribonucleoside 5'-triphosphate = RNA(n+1) + diphosphate. Its function is as follows. DNA-dependent RNA polymerase catalyzes the transcription of DNA into RNA using the four ribonucleoside triphosphates as substrates. The polypeptide is DNA-directed RNA polymerase subunit beta' (Sulfurimonas denitrificans (strain ATCC 33889 / DSM 1251) (Thiomicrospira denitrificans (strain ATCC 33889 / DSM 1251))).